Consider the following 163-residue polypeptide: SsrA-binding protein (163 aa).

It belongs to the SmpB family.

It is found in the cytoplasm. Functionally, required for rescue of stalled ribosomes mediated by trans-translation. Binds to transfer-messenger RNA (tmRNA), required for stable association of tmRNA with ribosomes. tmRNA and SmpB together mimic tRNA shape, replacing the anticodon stem-loop with SmpB. tmRNA is encoded by the ssrA gene; the 2 termini fold to resemble tRNA(Ala) and it encodes a 'tag peptide', a short internal open reading frame. During trans-translation Ala-aminoacylated tmRNA acts like a tRNA, entering the A-site of stalled ribosomes, displacing the stalled mRNA. The ribosome then switches to translate the ORF on the tmRNA; the nascent peptide is terminated with the 'tag peptide' encoded by the tmRNA and targeted for degradation. The ribosome is freed to recommence translation, which seems to be the essential function of trans-translation. The chain is SsrA-binding protein from Shewanella sp. (strain ANA-3).